We begin with the raw amino-acid sequence, 98 residues long: NADH-ubiquinone oxidoreductase chain 4L (98 aa).

Helical transmembrane passes span Met-1–Met-21, Ala-29–Leu-49, and Ile-61–Val-81.

The protein belongs to the complex I subunit 4L family. In terms of assembly, core subunit of respiratory chain NADH dehydrogenase (Complex I) which is composed of 45 different subunits.

It localises to the mitochondrion inner membrane. It carries out the reaction a ubiquinone + NADH + 5 H(+)(in) = a ubiquinol + NAD(+) + 4 H(+)(out). Its function is as follows. Core subunit of the mitochondrial membrane respiratory chain NADH dehydrogenase (Complex I) which catalyzes electron transfer from NADH through the respiratory chain, using ubiquinone as an electron acceptor. Part of the enzyme membrane arm which is embedded in the lipid bilayer and involved in proton translocation. In Lagenorhynchus albirostris (White-beaked dolphin), this protein is NADH-ubiquinone oxidoreductase chain 4L (MT-ND4L).